A 436-amino-acid polypeptide reads, in one-letter code: ATP-dependent RNA helicase RhlB (436 aa).

The Q motif signature appears at 9 to 37 (QKFADFPLHKEVHQALNEAGFEFCTPIQA). Residues 40–219 (LPILLEKKDI…YDHMNEPEKV (180 aa)) form the Helicase ATP-binding domain. ATP is bound at residue 53-60 (AQTGTGKT). A DEAD box motif is present at residues 165–168 (DEAD). The Helicase C-terminal domain maps to 243 to 390 (KMPLLLSLLE…VTSYDSDALL (148 aa)). The disordered stretch occupies residues 392–436 (DIPPPVRIHRKPSTHTRNTRDRSSGRPQGGQRNGPRRHDKTRRHS). Residues 425 to 436 (GPRRHDKTRRHS) are compositionally biased toward basic residues.

Belongs to the DEAD box helicase family. RhlB subfamily. Component of the RNA degradosome, which is a multiprotein complex involved in RNA processing and mRNA degradation.

The protein localises to the cytoplasm. It carries out the reaction ATP + H2O = ADP + phosphate + H(+). Functionally, DEAD-box RNA helicase involved in RNA degradation. Has RNA-dependent ATPase activity and unwinds double-stranded RNA. The sequence is that of ATP-dependent RNA helicase RhlB from Shewanella pealeana (strain ATCC 700345 / ANG-SQ1).